The chain runs to 206 residues: Ras-related protein Ral-B (206 aa).

21–29 contributes to the GTP binding site; the sequence is GSGGVGKSA. Positions 43–51 match the Effector region motif; the sequence is YEPTKADSY. Residues 68-72, 128-131, and 158-160 contribute to the GTP site; these read DTAGQ, NKSD, and SAK. Positions 180–189 are enriched in basic and acidic residues; the sequence is KMSENKDKNG. The interval 180–206 is disordered; the sequence is KMSENKDKNGKKSGKNKKSFKERCCLL. Residue C203 is modified to Cysteine methyl ester. C203 carries S-geranylgeranyl cysteine lipidation. The propeptide at 204–206 is removed in mature form; it reads CLL.

The protein belongs to the small GTPase superfamily. Ras family. In terms of assembly, interacts with EXOC2/Sec5 and EXOC8/Exo84. Interacts (via effector domain) with RALBP1. Post-translationally, prenylation is essential for membrane localization. The farnesylated form confers resistance to the proapoptotic and anti-anchorage-dependent growth effects of some geranylgeranyltransferase I inhibitors.

The protein resides in the cell membrane. The protein localises to the midbody. It carries out the reaction GTP + H2O = GDP + phosphate + H(+). Alternates between an inactive form bound to GDP and an active form bound to GTP. Activated by a guanine nucleotide-exchange factor (GEF) and inactivated by a GTPase-activating protein (GAP). Multifunctional GTPase involved in a variety of cellular processes including gene expression, cell migration, cell proliferation, oncogenic transformation and membrane trafficking. Accomplishes its multiple functions by interacting with distinct downstream effectors. Acts as a GTP sensor for GTP-dependent exocytosis of dense core vesicles. Required both to stabilize the assembly of the exocyst complex and to localize functional exocyst complexes to the leading edge of migrating cells. Required for suppression of apoptosis. In late stages of cytokinesis, upon completion of the bridge formation between dividing cells, mediates exocyst recruitment to the midbody to drive abscission. Involved in ligand-dependent receptor mediated endocytosis of the EGF and insulin receptors. The sequence is that of Ras-related protein Ral-B (RALB) from Macaca fascicularis (Crab-eating macaque).